The primary structure comprises 176 residues: Ribosome maturation factor RimM (176 aa).

One can recognise a PRC barrel domain in the interval 99–174 (KDEFYVRDLI…IVLIQPELWN (76 aa)).

The protein belongs to the RimM family. As to quaternary structure, binds ribosomal protein uS19.

It localises to the cytoplasm. In terms of biological role, an accessory protein needed during the final step in the assembly of 30S ribosomal subunit, possibly for assembly of the head region. Essential for efficient processing of 16S rRNA. May be needed both before and after RbfA during the maturation of 16S rRNA. It has affinity for free ribosomal 30S subunits but not for 70S ribosomes. The sequence is that of Ribosome maturation factor RimM from Leptospira borgpetersenii serovar Hardjo-bovis (strain JB197).